The sequence spans 318 residues: Olfactory receptor 13C9 (318 aa).

At 1-25 (MEWENQTILVEFFLKGHSVHPRLEL) the chain is on the extracellular side. Residue Asn-5 is glycosylated (N-linked (GlcNAc...) asparagine). The helical transmembrane segment at 26-46 (LFFVLIFIMYVVILLGNGTLI) threads the bilayer. The Cytoplasmic portion of the chain corresponds to 47 to 54 (LISILDPH). A helical membrane pass occupies residues 55–75 (LHTPMYFFLGNLSFLDICYTT). The Extracellular portion of the chain corresponds to 76–99 (TSIPSTLVSFLSERKTISFSGCAV). A disulfide bond links Cys-97 and Cys-189. The helical transmembrane segment at 100–120 (QMFLGLAMGTTECVLLGMMAF) threads the bilayer. Over 121–139 (DRYVAICNPLRYPIIMSKN) the chain is Cytoplasmic. Residues 140-160 (AYVPMAVGSWFAGIVNSAVQT) form a helical membrane-spanning segment. Residues 161 to 197 (TFVVQLPFCRKNVINHFSCEILAVMKLACADISGNEF) lie on the Extracellular side of the membrane. A helical membrane pass occupies residues 198-217 (LMLVATILFTLMPLLLIVIS). Topologically, residues 218 to 237 (YSLIISSILKIHSSEGRSKA) are cytoplasmic. Residues 238–258 (FSTCSAHLTVVIIFYGTILFM) form a helical membrane-spanning segment. The Extracellular portion of the chain corresponds to 259 to 277 (YMKPKSKETLNSDDLDATD). A helical transmembrane segment spans residues 278–298 (KIISMFYGVMTPMMNPLIYSL). The Cytoplasmic portion of the chain corresponds to 299–318 (RNKDVKEAVKHLPNRRFFSK).

This sequence belongs to the G-protein coupled receptor 1 family.

The protein resides in the cell membrane. In terms of biological role, odorant receptor. In Homo sapiens (Human), this protein is Olfactory receptor 13C9 (OR13C9).